A 591-amino-acid chain; its full sequence is L-fucose isomerase (591 aa).

Catalysis depends on proton acceptor residues Glu337 and Asp361. The Mn(2+) site is built by Glu337, Asp361, and His528.

It belongs to the L-fucose isomerase family. In terms of assembly, homohexamer. Mn(2+) serves as cofactor.

The protein resides in the cytoplasm. The enzyme catalyses L-fucose = L-fuculose. Its pathway is carbohydrate degradation; L-fucose degradation; L-lactaldehyde and glycerone phosphate from L-fucose: step 1/3. Functionally, converts the aldose L-fucose into the corresponding ketose L-fuculose. This chain is L-fucose isomerase, found in Escherichia coli O157:H7 (strain EC4115 / EHEC).